The sequence spans 426 residues: Peptidoglycan DD-endopeptidase ShyB (426 aa).

Residues Met-1–Phe-21 form the signal peptide. Positions Ser-32 to Ser-48 are enriched in polar residues. A disordered region spans residues Ser-32–Asp-55. Zn(2+)-binding residues include His-291, Asp-295, and His-372.

It belongs to the peptidase M23B family. In terms of assembly, monomer. The cofactor is Zn(2+).

Its subcellular location is the periplasm. Its pathway is cell wall degradation; peptidoglycan degradation. With respect to regulation, not inhibited by metal chelator EDTA. Functionally, cell wall peptidoglycan (PG) DD-endopeptidase, which may act as a substitute for other zinc-dependent PG endopeptidases (ShyA and ShyC) during zinc starvation. Hydrolyzes peptide cross-links which covalently connect adjacent PG strands probably to allow insertion of new glycans and thus cell wall expansion. Degrades purified whole PG sacculi in vitro. It is unclear how it is able to function in low zinc environments, but that may possibly be due to binding zinc with very high affinity, utilizing an alternative metal cofactor or that it may function independently of a bound metal cofactor. The polypeptide is Peptidoglycan DD-endopeptidase ShyB (Vibrio cholerae serotype O1 (strain ATCC 39315 / El Tor Inaba N16961)).